Here is a 383-residue protein sequence, read N- to C-terminus: Chaperone protein DnaJ (383 aa).

Residues 4–68 (DLYETLNVSR…DQRARYDRFG (65 aa)) enclose the J domain. The CR-type zinc-finger motif lies at 139–221 (GGEKEITINH…CSGRGRNQKQ (83 aa)). Residues Cys-152, Cys-155, Cys-169, Cys-172, Cys-195, Cys-198, Cys-209, and Cys-212 each coordinate Zn(2+). CXXCXGXG motif repeat units lie at residues 152 to 159 (CETCRGSG), 169 to 176 (CRNCGGQG), 195 to 202 (CPNCQGTG), and 209 to 216 (CPTCSGRG).

Belongs to the DnaJ family. Homodimer. The cofactor is Zn(2+).

It is found in the cytoplasm. In terms of biological role, participates actively in the response to hyperosmotic and heat shock by preventing the aggregation of stress-denatured proteins and by disaggregating proteins, also in an autonomous, DnaK-independent fashion. Unfolded proteins bind initially to DnaJ; upon interaction with the DnaJ-bound protein, DnaK hydrolyzes its bound ATP, resulting in the formation of a stable complex. GrpE releases ADP from DnaK; ATP binding to DnaK triggers the release of the substrate protein, thus completing the reaction cycle. Several rounds of ATP-dependent interactions between DnaJ, DnaK and GrpE are required for fully efficient folding. Also involved, together with DnaK and GrpE, in the DNA replication of plasmids through activation of initiation proteins. This Gloeobacter violaceus (strain ATCC 29082 / PCC 7421) protein is Chaperone protein DnaJ.